Consider the following 311-residue polypeptide: Phosphoribosylamine--glycine ligase (311 aa).

Residues 1–191 (DPRVRKQYIQ…LVQVLLAACR (191 aa)) form the ATP-grasp domain.

The protein belongs to the GARS family.

It localises to the plastid. The protein resides in the chloroplast. It catalyses the reaction 5-phospho-beta-D-ribosylamine + glycine + ATP = N(1)-(5-phospho-beta-D-ribosyl)glycinamide + ADP + phosphate + H(+). Its pathway is purine metabolism; IMP biosynthesis via de novo pathway; N(1)-(5-phospho-D-ribosyl)glycinamide from 5-phospho-alpha-D-ribose 1-diphosphate: step 2/2. This Vigna unguiculata (Cowpea) protein is Phosphoribosylamine--glycine ligase (PUR2).